The following is a 285-amino-acid chain: MSRNLGMRAKVLIKPLVLFQIIDSYERRPKGDNQVIGTLLGRNKEGHFEITNCFTVPHKEHPEINRIDLDIAYASEILELNMLTYPNERVLGWFCTGKSVSRSASLLHDYYARECGEVQPLHLVVDATLKSQRLSTRLYCAVEIGVPGGTKGLMFSLVPLEISNGNSDLVALRSIEKQSLQQGTKQLDRFIPELVQVVDATRDIQQRLDLVLRYIKDVLDRKRKPDNVVGRALHAALTAVPVMDPDKFRLMFNTNLRDMLMAITLSTMIKTQLEISEKLSCMQDQ.

The MPN domain occupies valine 11–glycine 145.

Belongs to the eIF-3 subunit F family. In terms of assembly, component of the eukaryotic translation initiation factor 3 (eIF-3) complex. The eIF-3 complex interacts with pix.

It localises to the cytoplasm. Its function is as follows. Component of the eukaryotic translation initiation factor 3 (eIF-3) complex, which is involved in protein synthesis of a specialized repertoire of mRNAs and, together with other initiation factors, stimulates binding of mRNA and methionyl-tRNAi to the 40S ribosome. The eIF-3 complex specifically targets and initiates translation of a subset of mRNAs involved in cell proliferation. In Drosophila erecta (Fruit fly), this protein is Eukaryotic translation initiation factor 3 subunit F-2.